An 87-amino-acid polypeptide reads, in one-letter code: Phosphoribosyl-ATP pyrophosphatase (87 aa).

The protein belongs to the PRA-PH family.

It localises to the cytoplasm. The catalysed reaction is 1-(5-phospho-beta-D-ribosyl)-ATP + H2O = 1-(5-phospho-beta-D-ribosyl)-5'-AMP + diphosphate + H(+). It participates in amino-acid biosynthesis; L-histidine biosynthesis; L-histidine from 5-phospho-alpha-D-ribose 1-diphosphate: step 2/9. This chain is Phosphoribosyl-ATP pyrophosphatase, found in Bifidobacterium longum (strain DJO10A).